The sequence spans 164 residues: UPF0478 protein SSP1024 (164 aa).

Residues 7 to 27 (IAGIIAAVAFLILVIGIVVVL) traverse the membrane as a helical segment. The interval 136–164 (RNRRDSANYKTSSVANETNHSYTTRVDNK) is disordered. Residues 143-164 (NYKTSSVANETNHSYTTRVDNK) are compositionally biased toward polar residues.

The protein belongs to the UPF0478 family.

The protein resides in the cell membrane. The polypeptide is UPF0478 protein SSP1024 (Staphylococcus saprophyticus subsp. saprophyticus (strain ATCC 15305 / DSM 20229 / NCIMB 8711 / NCTC 7292 / S-41)).